A 423-amino-acid polypeptide reads, in one-letter code: Haloacid dehalogenase-like hydrolase domain-containing 5 (423 aa).

An N-terminal signal peptide occupies residues 1–23 (MAAWGCVAALGAARGLCWRAARA).

Belongs to the HAD-like hydrolase superfamily. Widely expressed.

This Homo sapiens (Human) protein is Haloacid dehalogenase-like hydrolase domain-containing 5.